We begin with the raw amino-acid sequence, 286 residues long: Phosphatidylserine decarboxylase proenzyme (286 aa).

Active-site charge relay system; for autoendoproteolytic cleavage activity residues include D90, H147, and S252. The active-site Schiff-base intermediate with substrate; via pyruvic acid; for decarboxylase activity is S252. S252 bears the Pyruvic acid (Ser); by autocatalysis mark.

It belongs to the phosphatidylserine decarboxylase family. PSD-B subfamily. Prokaryotic type I sub-subfamily. As to quaternary structure, heterodimer of a large membrane-associated beta subunit and a small pyruvoyl-containing alpha subunit. Pyruvate serves as cofactor. In terms of processing, is synthesized initially as an inactive proenzyme. Formation of the active enzyme involves a self-maturation process in which the active site pyruvoyl group is generated from an internal serine residue via an autocatalytic post-translational modification. Two non-identical subunits are generated from the proenzyme in this reaction, and the pyruvate is formed at the N-terminus of the alpha chain, which is derived from the carboxyl end of the proenzyme. The autoendoproteolytic cleavage occurs by a canonical serine protease mechanism, in which the side chain hydroxyl group of the serine supplies its oxygen atom to form the C-terminus of the beta chain, while the remainder of the serine residue undergoes an oxidative deamination to produce ammonia and the pyruvoyl prosthetic group on the alpha chain. During this reaction, the Ser that is part of the protease active site of the proenzyme becomes the pyruvoyl prosthetic group, which constitutes an essential element of the active site of the mature decarboxylase.

The protein localises to the cell membrane. The catalysed reaction is a 1,2-diacyl-sn-glycero-3-phospho-L-serine + H(+) = a 1,2-diacyl-sn-glycero-3-phosphoethanolamine + CO2. Its pathway is phospholipid metabolism; phosphatidylethanolamine biosynthesis; phosphatidylethanolamine from CDP-diacylglycerol: step 2/2. In terms of biological role, catalyzes the formation of phosphatidylethanolamine (PtdEtn) from phosphatidylserine (PtdSer). In Pseudomonas fluorescens (strain SBW25), this protein is Phosphatidylserine decarboxylase proenzyme.